The chain runs to 220 residues: Cell division protein DedD (220 aa).

The helical transmembrane segment at 9–29 threads the bilayer; sequence LVGTIVLVALGVIVLPGLLDG. 2 disordered regions span residues 46 to 84 and 97 to 137; these read KAGD…AAPS and FEPE…EEKA. Residues 57-70 show a composition bias toward low complexity; the sequence is PAATQALPTQPPEG. Over residues 100-109 the composition is skewed to pro residues; the sequence is EPAPVAPPKP. Composition is skewed to basic and acidic residues over residues 110 to 119 and 127 to 137; these read KPVEPPKPKV and PEPKPVVEEKA. The 80-residue stretch at 138 to 217 folds into the SPOR domain; it reads APTGKAYVVQ…SGLSGVVMGY (80 aa).

It belongs to the DedD family.

It is found in the cell inner membrane. Its function is as follows. Non-essential cell division protein that could be required for efficient cell constriction. The protein is Cell division protein DedD of Escherichia coli (strain K12).